Here is a 451-residue protein sequence, read N- to C-terminus: Sensor histidine kinase CssS (451 aa).

Residues 1–9 (MKNKPLAFQ) are Cytoplasmic-facing. Residues 10-30 (IWVVISGILLAISILLLVLFS) form a helical membrane-spanning segment. At 31-165 (NTLRDFFTNE…RDDLAYTLFK (135 aa)) the chain is on the extracellular side. The chain crosses the membrane as a helical span at residues 166–186 (QLLFIIAVVILLSWIPAIWLA). Residues 187–239 (KYLSRPLVSFEKHVKRISEQDWDDPVKVDRKDEIGKLGHTIEEMRQKLVQKDE) form the HAMP domain. Over 187–451 (KYLSRPLVSF…GVTYRIAVPK (265 aa)) the chain is Cytoplasmic. One can recognise a Histidine kinase domain in the interval 247–451 (NISHDLKTPV…GVTYRIAVPK (205 aa)). Histidine 250 carries the post-translational modification Phosphohistidine; by autocatalysis.

Its subcellular location is the cell membrane. It catalyses the reaction ATP + protein L-histidine = ADP + protein N-phospho-L-histidine.. In terms of biological role, member of the two-component regulatory system CssS/CssR required to control the cellular response to secretion stress. Required for the transcription of htrA. Could detect misfolded proteins at the membrane-cell wall interface and then activate CssR by phosphorylation. The sequence is that of Sensor histidine kinase CssS (cssS) from Bacillus subtilis (strain 168).